A 636-amino-acid polypeptide reads, in one-letter code: DNA ligase (636 aa).

Lys113 (N6-AMP-lysine intermediate) is an active-site residue. The 77-residue stretch at Asn560 to Lys636 folds into the BRCT domain.

The protein belongs to the NAD-dependent DNA ligase family.

It catalyses the reaction NAD(+) + (deoxyribonucleotide)n-3'-hydroxyl + 5'-phospho-(deoxyribonucleotide)m = (deoxyribonucleotide)n+m + AMP + beta-nicotinamide D-nucleotide.. Catalyzes the formation of phosphodiester linkages between 5'-phosphoryl and 3'-hydroxyl groups in double-stranded DNA using NAD as a coenzyme and as the energy source for the reaction. The polypeptide is DNA ligase (Acanthamoeba polyphaga (Amoeba)).